Here is a 248-residue protein sequence, read N- to C-terminus: 2,3-bisphosphoglycerate-dependent phosphoglycerate mutase (248 aa).

Residues 9–16 (RHGHSEWN), 22–23 (TG), Arg-61, 88–91 (ERHY), Lys-99, 115–116 (RR), and 183–184 (GN) each bind substrate. His-10 serves as the catalytic Tele-phosphohistidine intermediate. Glu-88 acts as the Proton donor/acceptor in catalysis.

The protein belongs to the phosphoglycerate mutase family. BPG-dependent PGAM subfamily.

The enzyme catalyses (2R)-2-phosphoglycerate = (2R)-3-phosphoglycerate. It functions in the pathway carbohydrate degradation; glycolysis; pyruvate from D-glyceraldehyde 3-phosphate: step 3/5. In terms of biological role, catalyzes the interconversion of 2-phosphoglycerate and 3-phosphoglycerate. This is 2,3-bisphosphoglycerate-dependent phosphoglycerate mutase from Arthrobacter sp. (strain FB24).